The following is a 501-amino-acid chain: Glycosyltransferase family 92 protein F13G3.3 (501 aa).

A helical transmembrane segment spans residues 10-30; sequence LSVVLLFSFLFFVTAVLLQFI. The region spanning 151–439 is the GT92 domain; the sequence is KPVVMCISPL…ISDCYKQSYY (289 aa).

Belongs to the glycosyltransferase 92 family.

It localises to the membrane. The chain is Glycosyltransferase family 92 protein F13G3.3 from Caenorhabditis elegans.